A 427-amino-acid chain; its full sequence is 3-phosphoshikimate 1-carboxyvinyltransferase (427 aa).

Residues K22, S23, and R27 each contribute to the 3-phosphoshikimate site. K22 lines the phosphoenolpyruvate pocket. Positions 97 and 125 each coordinate phosphoenolpyruvate. The 3-phosphoshikimate site is built by S171, S172, Q173, S199, D315, N338, and K342. Q173 contacts phosphoenolpyruvate. Residue D315 is the Proton acceptor of the active site. Phosphoenolpyruvate is bound by residues R346, R388, and K413.

It belongs to the EPSP synthase family. As to quaternary structure, monomer.

The protein localises to the cytoplasm. The enzyme catalyses 3-phosphoshikimate + phosphoenolpyruvate = 5-O-(1-carboxyvinyl)-3-phosphoshikimate + phosphate. The protein operates within metabolic intermediate biosynthesis; chorismate biosynthesis; chorismate from D-erythrose 4-phosphate and phosphoenolpyruvate: step 6/7. Its function is as follows. Catalyzes the transfer of the enolpyruvyl moiety of phosphoenolpyruvate (PEP) to the 5-hydroxyl of shikimate-3-phosphate (S3P) to produce enolpyruvyl shikimate-3-phosphate and inorganic phosphate. This chain is 3-phosphoshikimate 1-carboxyvinyltransferase, found in Aliivibrio salmonicida (strain LFI1238) (Vibrio salmonicida (strain LFI1238)).